The chain runs to 1199 residues: DNA-directed RNA polymerase subunit beta' (1199 aa).

Zn(2+) is bound by residues Cys60, Cys62, Cys75, and Cys78. Residues Asp449, Asp451, and Asp453 each coordinate Mg(2+). Positions 818, 892, 899, and 902 each coordinate Zn(2+).

The protein belongs to the RNA polymerase beta' chain family. In terms of assembly, the RNAP catalytic core consists of 2 alpha, 1 beta, 1 beta' and 1 omega subunit. When a sigma factor is associated with the core the holoenzyme is formed, which can initiate transcription. It depends on Mg(2+) as a cofactor. Zn(2+) is required as a cofactor.

The catalysed reaction is RNA(n) + a ribonucleoside 5'-triphosphate = RNA(n+1) + diphosphate. In terms of biological role, DNA-dependent RNA polymerase catalyzes the transcription of DNA into RNA using the four ribonucleoside triphosphates as substrates. In Geobacillus kaustophilus (strain HTA426), this protein is DNA-directed RNA polymerase subunit beta'.